A 734-amino-acid chain; its full sequence is Photosystem I P700 chlorophyll a apoprotein A2 (734 aa).

Helical transmembrane passes span Ile46–Ala69, Leu135–Gln158, Leu175–Ile199, Met273–Tyr291, Ile330–Tyr353, Ala369–Ile395, Ala417–His439, and Phe517–Val535. Residues Cys559 and Cys568 each contribute to the [4Fe-4S] cluster site. Transmembrane regions (helical) follow at residues Ala575–Trp596 and Leu643–Ile665. Chlorophyll a is bound by residues His654, Met662, and Tyr670. Residue Trp671 coordinates phylloquinone. The helical transmembrane segment at Leu707–Ala727 threads the bilayer.

This sequence belongs to the PsaA/PsaB family. The PsaA/B heterodimer binds the P700 chlorophyll special pair and subsequent electron acceptors. PSI consists of a core antenna complex that captures photons, and an electron transfer chain that converts photonic excitation into a charge separation. The eukaryotic PSI reaction center is composed of at least 11 subunits. The cofactor is P700 is a chlorophyll a/chlorophyll a' dimer, A0 is one or more chlorophyll a, A1 is one or both phylloquinones and FX is a shared 4Fe-4S iron-sulfur center..

The protein localises to the plastid. The protein resides in the chloroplast thylakoid membrane. It catalyses the reaction reduced [plastocyanin] + hnu + oxidized [2Fe-2S]-[ferredoxin] = oxidized [plastocyanin] + reduced [2Fe-2S]-[ferredoxin]. In terms of biological role, psaA and PsaB bind P700, the primary electron donor of photosystem I (PSI), as well as the electron acceptors A0, A1 and FX. PSI is a plastocyanin-ferredoxin oxidoreductase, converting photonic excitation into a charge separation, which transfers an electron from the donor P700 chlorophyll pair to the spectroscopically characterized acceptors A0, A1, FX, FA and FB in turn. Oxidized P700 is reduced on the lumenal side of the thylakoid membrane by plastocyanin. This Nandina domestica (Heavenly bamboo) protein is Photosystem I P700 chlorophyll a apoprotein A2.